We begin with the raw amino-acid sequence, 223 residues long: Serine/threonine/tyrosine-interacting protein (223 aa).

Residues 28-176 (EMQEVLPGLF…LQEYEAIYLA (149 aa)) form the Tyrosine-protein phosphatase domain. Residues 76–78 (FQQ) carry the Interaction with FBXW7 motif. Phosphoserine is present on residues Ser184 and Ser201. The disordered stretch occupies residues 199–223 (TGSVKRTHEEDDDFGNMQVATAQNG).

This sequence belongs to the protein-tyrosine phosphatase family. Non-receptor class subfamily. As to quaternary structure, interacts with MAPK1; independently of MAPK1 phosphorylation status. Interacts with CARHSP1/Crhsp-24. Interacts (via FQQ motif) with FBXW7 (via F-box domain); the interaction is direct and prevents FBXW7 interaction with SKP1, a component of the SCF(FBXW7) complex. In terms of tissue distribution, widely expressed with highest levels in muscle, testis and brain. In testis, expression starts 13-14 days after birth and is limited to the seminiferous tubule and to round and elongating spermatids. Expression is low in condensing spermatids and pachytene spermatocytes, and absent in spermatogonia, spermatozoa and somatic Sertoli cells.

The protein resides in the nucleus. It localises to the cytoplasm. Its subcellular location is the cytosol. In terms of biological role, catalytically inactive phosphatase. Acts as a nuclear anchor for MAPK1/MAPK3 (ERK1/ERK2). Modulates cell-fate decisions and cell migration by spatiotemporal regulation of MAPK1/MAPK3 (ERK1/ERK2). By binding to the F-box of FBXW7, prevents the assembly of FBXW7 into the SCF E3 ubiquitin-protein ligase complex, and thereby inhibits degradation of its substrates. Plays a role in spermatogenesis. This Mus musculus (Mouse) protein is Serine/threonine/tyrosine-interacting protein.